The chain runs to 262 residues: Hydroxyethylthiazole kinase (262 aa).

Position 43 (Met43) interacts with substrate. The ATP site is built by Arg118 and Thr164. Ala191 is a binding site for substrate.

Belongs to the Thz kinase family. Mg(2+) is required as a cofactor.

It carries out the reaction 5-(2-hydroxyethyl)-4-methylthiazole + ATP = 4-methyl-5-(2-phosphooxyethyl)-thiazole + ADP + H(+). It participates in cofactor biosynthesis; thiamine diphosphate biosynthesis; 4-methyl-5-(2-phosphoethyl)-thiazole from 5-(2-hydroxyethyl)-4-methylthiazole: step 1/1. Catalyzes the phosphorylation of the hydroxyl group of 4-methyl-5-beta-hydroxyethylthiazole (THZ). The sequence is that of Hydroxyethylthiazole kinase from Cereibacter sphaeroides (strain ATCC 17029 / ATH 2.4.9) (Rhodobacter sphaeroides).